The chain runs to 369 residues: Probable peptidoglycan glycosyltransferase FtsW (369 aa).

The next 8 helical transmembrane spans lie at 11–31 (LLSV…SSSV), 48–68 (NFIH…VPIY), 77–97 (LILC…SNHG), 134–151 (TSTI…KLLL), 154–174 (PDFG…FLIG), 177–197 (FLFL…LIYF), 265–285 (LGYL…FQGM), and 306–326 (ISLL…GILP).

The protein belongs to the SEDS family. FtsW subfamily.

The protein resides in the cell inner membrane. It catalyses the reaction [GlcNAc-(1-&gt;4)-Mur2Ac(oyl-L-Ala-gamma-D-Glu-L-Lys-D-Ala-D-Ala)](n)-di-trans,octa-cis-undecaprenyl diphosphate + beta-D-GlcNAc-(1-&gt;4)-Mur2Ac(oyl-L-Ala-gamma-D-Glu-L-Lys-D-Ala-D-Ala)-di-trans,octa-cis-undecaprenyl diphosphate = [GlcNAc-(1-&gt;4)-Mur2Ac(oyl-L-Ala-gamma-D-Glu-L-Lys-D-Ala-D-Ala)](n+1)-di-trans,octa-cis-undecaprenyl diphosphate + di-trans,octa-cis-undecaprenyl diphosphate + H(+). It functions in the pathway cell wall biogenesis; peptidoglycan biosynthesis. In terms of biological role, peptidoglycan polymerase that is essential for cell division. This Riesia pediculicola (strain USDA) protein is Probable peptidoglycan glycosyltransferase FtsW.